A 144-amino-acid polypeptide reads, in one-letter code: Large ribosomal subunit protein uL13 (144 aa).

The protein belongs to the universal ribosomal protein uL13 family. As to quaternary structure, part of the 50S ribosomal subunit.

This protein is one of the early assembly proteins of the 50S ribosomal subunit, although it is not seen to bind rRNA by itself. It is important during the early stages of 50S assembly. This chain is Large ribosomal subunit protein uL13, found in Clostridium novyi (strain NT).